A 341-amino-acid chain; its full sequence is UPF0283 membrane protein VV2076 (341 aa).

4 consecutive transmembrane segments (helical) span residues 64–84, 93–113, 207–227, and 255–275; these read LAGG…VDSV, WLTL…LGAM, ESAA…LVAW, and LVLA…AGMD.

This sequence belongs to the UPF0283 family.

It localises to the cell inner membrane. This Vibrio vulnificus (strain YJ016) protein is UPF0283 membrane protein VV2076.